The sequence spans 355 residues: U5 small nuclear ribonucleoprotein 40 kDa protein (355 aa).

7 WD repeats span residues Gly60 to Ser99, Gly103 to Arg142, Glu145 to Leu185, Gln187 to Tyr226, Ser230 to Arg269, Asn280 to Cys319, and Gly322 to Pro355.

As to quaternary structure, component of the pre-catalytic and catalytic spliceosome complexes. Component of the postcatalytic spliceosome P complex. Part of the U5 snRNP complex. Component of the U4/U6-U5 tri-snRNP complex.

The protein resides in the nucleus. In terms of biological role, required for pre-mRNA splicing as component of the activated spliceosome. Component of the U5 small nuclear ribonucleoprotein (snRNP) complex and the U4/U6-U5 tri-snRNP complex, building blocks of the spliceosome. This Dictyostelium discoideum (Social amoeba) protein is U5 small nuclear ribonucleoprotein 40 kDa protein (snrnp40).